The sequence spans 547 residues: MRVNLLIAMIIFALIWPVTALRAAVSKTTWADAPAREFVFVENNSDDNFFVTPGGALDPRLTGANRWTGLKYNGSGTIYQQSLGYIDNGYNTGLYTNWKFDMWLENSPVSSPLTGLRCINWYAGCNMTTSLILPQTTDTSGFYGATVTSGGAKWMHGMLSDAFYQYLQQMPVGSSFTMTINACQTSVNYDASSGARCKDQASGNWYVRNVTHTKAANLRLINTHSLAEVFINSDGVPTLGEGNADCRTQTIGSRSGLSCKMVNYTLQTNGLSNTSIHIFPAIANSSLASAVGAYDMQFSLNGSSWKPVSNTAYYYTFNEMKSADSIYVFFSSNFFKQMVNQGISDINTKDLFNFRFQNTTSPESGWYEFSTSNTLIIKPRDFSISIISDEYTQTPSREGYVGSGESALDFGYIVTTSGKTAADEVLIKVTGPAQVIGGRSYCVFSSDDGKAKVPFPATLSFITRNGATKTYDAGCDDSWRDMTDALWLTTPWTDISGEVGQMDKTTVKFSIPMDNAISLRTVDDNGWFGEVSASGEIHVQATWRNIN.

Positions 1-23 are cleaved as a signal peptide; that stretch reads MRVNLLIAMIIFALIWPVTALRA.

This sequence belongs to the EcpD/MatE family. In terms of assembly, forms polymers. Interacts with EcpA.

It is found in the fimbrium. Its function is as follows. Part of the ecpRABCDE operon, which encodes the E.coli common pilus (ECP). ECP is found in both commensal and pathogenic strains and plays a dual role in early-stage biofilm development and host cell recognition. Tip pilus adhesin, which is required for assembly of EcpA into fibers. This chain is Fimbria adhesin EcpD (ecpD), found in Escherichia coli O157:H7.